The following is a 289-amino-acid chain: Ribosomal RNA small subunit methyltransferase I (289 aa).

It belongs to the methyltransferase superfamily. RsmI family.

The protein resides in the cytoplasm. It catalyses the reaction cytidine(1402) in 16S rRNA + S-adenosyl-L-methionine = 2'-O-methylcytidine(1402) in 16S rRNA + S-adenosyl-L-homocysteine + H(+). Its function is as follows. Catalyzes the 2'-O-methylation of the ribose of cytidine 1402 (C1402) in 16S rRNA. This Helicobacter pylori (strain J99 / ATCC 700824) (Campylobacter pylori J99) protein is Ribosomal RNA small subunit methyltransferase I.